The primary structure comprises 78 residues: Large ribosomal subunit protein bL28 (78 aa).

It belongs to the bacterial ribosomal protein bL28 family.

In Methylobacillus flagellatus (strain ATCC 51484 / DSM 6875 / VKM B-1610 / KT), this protein is Large ribosomal subunit protein bL28.